The sequence spans 252 residues: NAC domain-containing protein 83 (252 aa).

Positions 14–160 constitute an NAC domain; sequence LPPGFRFHPT…NWVLCRIFLK (147 aa). The DNA-binding element occupies 110–166; the sequence is VGLKKTLVFYKGKPPHGSRTDWIMHEYRLSSSPPSSMGPTQNWVLCRIFLKKRAGNK. Disordered regions lie at residues 165 to 194 and 217 to 252; these read NKND…IITT and LNLL…NSFR. Composition is skewed to low complexity over residues 180–194 and 219–252; these read NNNN…IITT and LLPS…NSFR. Residues 213 to 226 form a PEST-like region; the sequence is RTTDLNLLPSSPSS.

Interacts with NAC007/VND4, NAC026/VND5 and NAC030/VND7. Interacts with the mungbean yellow mosaic virus (MYMV) AC1 replication-associated protein. Expressed in xylem and phloem cells in roots and inflorescence stems. Highly expressed in senescent leaves. Expressed in roots, and abscission and dehiscence tissues, such as axils of bracts and abscission zones in cauline leaves and siliques.

Its subcellular location is the nucleus. In terms of biological role, transcriptional repressor that negatively regulates the expression of genes involved in xylem vessel formation. Represses the transcriptional activation activity of NAC030/VND7, which regulates protoxylem vessel differentiation by promoting immature xylem vessel-specific genes expression. Transcriptional activator that regulates the COLD-REGULATED (COR15A and COR15B) and RESPONSIVE TO DEHYDRATION (LTI78/RD29A and LTI65/RD29B) genes by binding directly to their promoters. Mediates signaling crosstalk between salt stress response and leaf aging process. May play a role in DNA replication of mungbean yellow mosaic virus. The sequence is that of NAC domain-containing protein 83 from Arabidopsis thaliana (Mouse-ear cress).